The chain runs to 330 residues: DNA-directed RNA polymerase subunit alpha (330 aa).

Positions Met1–Glu231 are alpha N-terminal domain (alpha-NTD). The tract at residues Phe250–Arg330 is alpha C-terminal domain (alpha-CTD).

The protein belongs to the RNA polymerase alpha chain family. As to quaternary structure, homodimer. The RNAP catalytic core consists of 2 alpha, 1 beta, 1 beta' and 1 omega subunit. When a sigma factor is associated with the core the holoenzyme is formed, which can initiate transcription.

The catalysed reaction is RNA(n) + a ribonucleoside 5'-triphosphate = RNA(n+1) + diphosphate. Its function is as follows. DNA-dependent RNA polymerase catalyzes the transcription of DNA into RNA using the four ribonucleoside triphosphates as substrates. The polypeptide is DNA-directed RNA polymerase subunit alpha (Polaromonas naphthalenivorans (strain CJ2)).